Consider the following 692-residue polypeptide: Elongation factor G (692 aa).

In terms of domain architecture, tr-type G spans 9–284 (HKVRNIGIAA…AVVDYLPAPD (276 aa)). GTP-binding positions include 18 to 25 (AHIDAGKT), 82 to 86 (DTPGH), and 136 to 139 (NKMD).

It belongs to the TRAFAC class translation factor GTPase superfamily. Classic translation factor GTPase family. EF-G/EF-2 subfamily.

It is found in the cytoplasm. Functionally, catalyzes the GTP-dependent ribosomal translocation step during translation elongation. During this step, the ribosome changes from the pre-translocational (PRE) to the post-translocational (POST) state as the newly formed A-site-bound peptidyl-tRNA and P-site-bound deacylated tRNA move to the P and E sites, respectively. Catalyzes the coordinated movement of the two tRNA molecules, the mRNA and conformational changes in the ribosome. The protein is Elongation factor G of Campylobacter concisus (strain 13826).